The chain runs to 290 residues: 33 kDa chaperonin (290 aa).

2 cysteine pairs are disulfide-bonded: cysteine 235-cysteine 237 and cysteine 268-cysteine 271.

Belongs to the HSP33 family. Post-translationally, under oxidizing conditions two disulfide bonds are formed involving the reactive cysteines. Under reducing conditions zinc is bound to the reactive cysteines and the protein is inactive.

The protein resides in the cytoplasm. Functionally, redox regulated molecular chaperone. Protects both thermally unfolding and oxidatively damaged proteins from irreversible aggregation. Plays an important role in the bacterial defense system toward oxidative stress. This chain is 33 kDa chaperonin, found in Streptococcus pyogenes serotype M5 (strain Manfredo).